Here is a 477-residue protein sequence, read N- to C-terminus: Dihydrolipoyl dehydrogenase (477 aa).

Residues 34-49 (EKYKGKEGKTALGGTC), Lys-58, and Gly-122 contribute to the FAD site. Cys-49 and Cys-54 are disulfide-bonded. NAD(+)-binding positions include 188–192 (GAGVI), Glu-211, Val-245, and 276–279 (AVGR). Positions 319 and 327 each coordinate FAD. His-451 functions as the Proton acceptor in the catalytic mechanism.

It belongs to the class-I pyridine nucleotide-disulfide oxidoreductase family. In terms of assembly, homodimer. FAD serves as cofactor.

It is found in the cytoplasm. The catalysed reaction is N(6)-[(R)-dihydrolipoyl]-L-lysyl-[protein] + NAD(+) = N(6)-[(R)-lipoyl]-L-lysyl-[protein] + NADH + H(+). Its function is as follows. The pyruvate dehydrogenase complex catalyzes the overall conversion of pyruvate to acetyl-CoA and CO(2). It contains multiple copies of three enzymatic components: pyruvate dehydrogenase (E1), dihydrolipoamide acetyltransferase (E2) and lipoamide dehydrogenase (E3). The polypeptide is Dihydrolipoyl dehydrogenase (Azotobacter vinelandii).